Reading from the N-terminus, the 181-residue chain is Ubiquitin-like protein 4B (181 aa).

Residues 1 to 76 (MWLTVKLLLG…LNVIIRPLEK (76 aa)) form the Ubiquitin-like domain. A disordered region spans residues 139–181 (PEGKHSGATGSTRESKGDMEPRRNMKCNLAHKDGFKREKSPGK). 2 stretches are compositionally biased toward basic and acidic residues: residues 151–161 (RESKGDMEPRR) and 168–181 (AHKD…SPGK).

The protein resides in the cytoplasm. The polypeptide is Ubiquitin-like protein 4B (UBL4B) (Monodelphis domestica (Gray short-tailed opossum)).